The following is an 846-amino-acid chain: Translation initiation factor IF-2 (846 aa).

The disordered stretch occupies residues 94–263 (QRSPEEIQAE…HGFQNPTGPV (170 aa)). Over residues 96 to 135 (SPEEIQAEQKRELDERRAAENAARDKVEAEVRQRNEEQAR) the composition is skewed to basic and acidic residues. Composition is skewed to low complexity over residues 136–148 (RQAAGSAAAAPAP) and 158–176 (AAPVAAPAPVVADAPASED). 2 stretches are compositionally biased toward basic and acidic residues: residues 177-206 (AAARAAERKKDETRRNESRTRDDDRRRGEA) and 230-239 (TTDEESDGAR). A compositionally biased stretch (basic residues) spans 240–253 (RGRGGKSKLKKRNQ). The tr-type G domain occupies 346–513 (SRAPVVTVMG…AVLLQAEILE (168 aa)). Positions 355 to 362 (GHVDHGKT) are G1. Residue 355-362 (GHVDHGKT) participates in GTP binding. Positions 380 to 384 (GITQH) are G2. Residues 401-404 (DTPG) are G3. Residues 401 to 405 (DTPGH) and 455 to 458 (NKID) contribute to the GTP site. The interval 455–458 (NKID) is G4. Residues 491–493 (SAK) form a G5 region.

It belongs to the TRAFAC class translation factor GTPase superfamily. Classic translation factor GTPase family. IF-2 subfamily.

Its subcellular location is the cytoplasm. Functionally, one of the essential components for the initiation of protein synthesis. Protects formylmethionyl-tRNA from spontaneous hydrolysis and promotes its binding to the 30S ribosomal subunits. Also involved in the hydrolysis of GTP during the formation of the 70S ribosomal complex. The protein is Translation initiation factor IF-2 of Pseudomonas putida (strain ATCC 47054 / DSM 6125 / CFBP 8728 / NCIMB 11950 / KT2440).